The primary structure comprises 685 residues: Heat shock protein homolog SSE1 (685 aa).

The interval glutamine 651–glutamate 685 is disordered. Basic and acidic residues predominate over residues arginine 673–glutamate 685.

This sequence belongs to the heat shock protein 70 family.

Its subcellular location is the cytoplasm. This is Heat shock protein homolog SSE1 (SSE1) from Naumovozyma castellii (Yeast).